The chain runs to 467 residues: Zinc finger protein ZIC 3 (467 aa).

The segment at 66 to 107 (LSSGQSSAFTPQGSGYANALGHHHHHHHHHHHTSQVPSYGGA) is disordered. The segment covering 67–80 (SSGQSSAFTPQGSG) has biased composition (polar residues). Over residues 86–98 (GHHHHHHHHHHHT) the composition is skewed to basic residues. A Glycyl lysine isopeptide (Lys-Gly) (interchain with G-Cter in SUMO2) cross-link involves residue lysine 248. Residues 251–286 (LSCKWIDEAQLSRPKKSCDRTFSTMHELVTHVTMEH) form a C2H2-type 1; atypical zinc finger. The segment at 295–322 (HVCYWEECPREGKSFKAKYKLVNHIRVH) adopts a C2H2-type 2; atypical zinc-finger fold. Short sequence motifs (nuclear localization signal) lie at residues 297-322 (CYWEECPREGKSFKAKYKLVNHIRVH) and 330-352 (CPFPGCGKIFARSENLKIHKRTH). 3 C2H2-type zinc fingers span residues 328–352 (FPCPFPGCGKIFARSENLKIHKRTH), 358–382 (FKCEFEGCDRRFANSSDRKKHMHVH), and 388–410 (YICKVCDKSYTHPSSLRKHMKVH). Residues 404 to 467 (RKHMKVHESQ…LPPNFNEWYV (64 aa)) are disordered. Residues 412-428 (SQGSDSSPAASSGYESS) show a composition bias toward low complexity. The segment covering 435 to 455 (SANSKDTTKTPSAVQTSTSHN) has biased composition (polar residues).

This sequence belongs to the GLI C2H2-type zinc-finger protein family. In terms of assembly, interacts (via the C2H2-type domains 3, 4 and 5) with MDFIC (via the C2H2-type domains 3, 4 and 5); the interaction reduces its transcriptional activity. Interacts with KPNA1 and KPNA6. Interacts (via C2H2-type domains 3, 4 and 5) with GLI3; the interaction enhances its transcriptional activity.

The protein localises to the nucleus. It localises to the cytoplasm. Its function is as follows. Acts as a transcriptional activator. Required in the earliest stages in both axial midline development and left-right (LR) asymmetry specification. Binds to the minimal GLI-consensus sequence 5'-GGGTGGTC-3'. This is Zinc finger protein ZIC 3 (ZIC3) from Homo sapiens (Human).